The primary structure comprises 1044 residues: MAKVRVYELAKEFGVESKVVLATLKEMGEFVRSASSTVEPPVIRRLKDKFPTEGGAASRPAPAVKPGPRLPQGARPGPAPAARPQAPAPAQPAPPQPAPAAASTPAPAPAPAPRPAEPAANPAPAAPPAFQAPAPAPAERPAAAQRPAAPAPQRPAPAGRPSTPPVSGGPGQGPRPGARPGGPGAPGARPGAPGAGGPGARRPGPGDRPERSERPDRGDRPQGDRPRSDRPQGERQQGDRPQGDRPGRPGAPGGAPRPGAGAPRPGNNPFAPSQGMPRSQGDRPGGAPRPGNNPFASNQGMPRPQGGPRPTPAGPGGPRPGGPRPNPGMMPARPTVGRPGAGPGAGRPGAPGRGGPGGARGGAGGGFAGRPGGPSAGGGGGGFAGRPGGGGGGPRGNRGGTQGAFGRAGGRPVRGRKSKRAKRQEYEAMQAPAVGGVSVRHGDGTTVLRIRRGASLSDFAERIDADPAALVTILFHLGEMATATQSLDEDTFQLLGGELGYVIEVVSPEDEERELLAGFSIDLDAELEAEGDDDLSARPPVVTVMGHVDHGKTKLLDAIRSSDVVAKEAGGITQHIGAYQVVKEHEGIERPITFIDTPGHEAFTAMRARGAKVTDIAILVVAADDGVMPQTIEALNHAQAADVPIVVAVNKVDKEGANPDKVRQQLTEYNLVAEEYGGDTMFVDVSARQGTGLDSLLEAVLLTADASLDLRANSDKDARGIAIEGNLDKGRGPVATVLVQSGTLHVGDAIVAGTGYGRVRAMLDENGDAVQEATPSRPVQVLGLTSVPGAGDTFLVAPDDRTARQIAEKREAQERNAALAKARKRITLEDFTKALQQGKVETLNLILKGDGAGSVEALEDALFKIDVGDEVELRVIDRGVGAVTKNNVNLAVASNAIIIGFNVRPEQQTKEYADREGVDIRFYSVIYAAIEDVEASLKGLLKPEFEEVQLGTAEVREIFRSSKFGNIAGTLVRSGLIRRNSKARVLRRGVVHGDNLTIESLRRFKDDATEVREGYECGIGLGSYNDLQVDDVIETYEMQEKPRG.

The segment at 31-425 (VRSASSTVEP…RKSKRAKRQE (395 aa)) is disordered. 2 stretches are compositionally biased toward pro residues: residues 77–98 (GPAP…PQPA) and 106–116 (APAPAPAPRPA). The segment covering 117-148 (EPAANPAPAAPPAFQAPAPAPAERPAAAQRPA) has biased composition (low complexity). Residues 168–185 (GGPGQGPRPGARPGGPGA) show a composition bias toward gly residues. A compositionally biased stretch (basic and acidic residues) spans 204–247 (GPGDRPERSERPDRGDRPQGDRPRSDRPQGERQQGDRPQGDRPG). A compositionally biased stretch (low complexity) spans 285–304 (GGAPRPGNNPFASNQGMPRP). Positions 305-328 (QGGPRPTPAGPGGPRPGGPRPNPG) are enriched in pro residues. The segment covering 329 to 338 (MMPARPTVGR) has biased composition (low complexity). Gly residues predominate over residues 339-409 (PGAGPGAGRP…GTQGAFGRAG (71 aa)). A compositionally biased stretch (basic residues) spans 413 to 422 (VRGRKSKRAK). One can recognise a tr-type G domain in the interval 537–709 (ARPPVVTVMG…VLLTADASLD (173 aa)). Residues 546 to 553 (GHVDHGKT) form a G1 region. 546-553 (GHVDHGKT) serves as a coordination point for GTP. A G2 region spans residues 571–575 (GITQH). Residues 596-599 (DTPG) form a G3 region. Residues 596-600 (DTPGH) and 650-653 (NKVD) each bind GTP. Residues 650 to 653 (NKVD) are G4. A G5 region spans residues 686-688 (SAR).

The protein belongs to the TRAFAC class translation factor GTPase superfamily. Classic translation factor GTPase family. IF-2 subfamily.

It localises to the cytoplasm. Functionally, one of the essential components for the initiation of protein synthesis. Protects formylmethionyl-tRNA from spontaneous hydrolysis and promotes its binding to the 30S ribosomal subunits. Also involved in the hydrolysis of GTP during the formation of the 70S ribosomal complex. This chain is Translation initiation factor IF-2, found in Kineococcus radiotolerans (strain ATCC BAA-149 / DSM 14245 / SRS30216).